A 597-amino-acid polypeptide reads, in one-letter code: Golgin subfamily A member 8C (597 aa).

Disordered regions lie at residues 1–80 (MAEE…VPDS) and 96–120 (KQQK…QKAE). Polar residues predominate over residues 38–50 (TNGSIHETATSGG). The segment covering 53 to 70 (SPGDSSSTSSSLHAPQSP) has biased composition (low complexity). Coiled coils occupy residues 81–141 (RSVK…NTDL), 199–255 (EWKL…SQEV), and 296–394 (SEVE…GKRL). Positions 100–120 (KQVEHQLEEEKKANNEKQKAE) are enriched in basic and acidic residues. Disordered stretches follow at residues 390–422 (LGKR…SGFM), 457–498 (PITK…GVAA), and 549–576 (PVQG…QEHP). Residues 470–483 (PGGGHHQAGPGQGG) are compositionally biased toward gly residues. Residues 553–563 (ETREGSPHDKP) show a composition bias toward basic and acidic residues.

The protein belongs to the GOLGA8 family.

The sequence is that of Golgin subfamily A member 8C (GOLGA8CP) from Homo sapiens (Human).